We begin with the raw amino-acid sequence, 102 residues long: MTDETASQEASQSTDAAAPARGFRKVREGLVVSDKMTKTVVVAVEDRVQHPLYGKTIRRTKKVKAHDESGTTGVGDRVLLMETRPLSATKRWRIVQVLEKAK.

Residues 1–15 (MTDETASQEASQSTD) are compositionally biased toward polar residues. The interval 1–20 (MTDETASQEASQSTDAAAPA) is disordered.

The protein belongs to the universal ribosomal protein uS17 family. Part of the 30S ribosomal subunit.

In terms of biological role, one of the primary rRNA binding proteins, it binds specifically to the 5'-end of 16S ribosomal RNA. This chain is Small ribosomal subunit protein uS17, found in Frankia casuarinae (strain DSM 45818 / CECT 9043 / HFP020203 / CcI3).